A 448-amino-acid chain; its full sequence is Glucose-6-phosphate isomerase (448 aa).

Glu290 functions as the Proton donor in the catalytic mechanism. Active-site residues include His311 and Lys425.

The protein belongs to the GPI family.

The protein localises to the cytoplasm. The enzyme catalyses alpha-D-glucose 6-phosphate = beta-D-fructose 6-phosphate. The protein operates within carbohydrate biosynthesis; gluconeogenesis. It participates in carbohydrate degradation; glycolysis; D-glyceraldehyde 3-phosphate and glycerone phosphate from D-glucose: step 2/4. In terms of biological role, catalyzes the reversible isomerization of glucose-6-phosphate to fructose-6-phosphate. This is Glucose-6-phosphate isomerase from Lactococcus lactis subsp. lactis (strain IL1403) (Streptococcus lactis).